A 358-amino-acid polypeptide reads, in one-letter code: Aromatic amino acid aminotransferase (358 aa).

Position 214 is an N6-(pyridoxal phosphate)lysine (Lys-214).

The protein belongs to the class-II pyridoxal-phosphate-dependent aminotransferase family. In terms of assembly, homodimer. Pyridoxal 5'-phosphate serves as cofactor.

It carries out the reaction an aromatic L-alpha-amino acid + 2-oxoglutarate = an aromatic oxo-acid + L-glutamate. Functionally, aminotransferase that catalyzes the conversion of aromatic amino acids and 2-oxoglutarate into corresponding aromatic oxo acids and L-glutamate. This Rhodococcus opacus (strain B4) protein is Aromatic amino acid aminotransferase.